Reading from the N-terminus, the 644-residue chain is Threonine--tRNA ligase (644 aa).

Residues 1 to 61 form the TGS domain; it reads MNVTIEGQVF…ADTTTIEPVF (61 aa). The interval 241–532 is catalytic; that stretch reads DHRKLGQQLD…LTEHFAGAFP (292 aa). Residues C333, H384, and H509 each contribute to the Zn(2+) site.

The protein belongs to the class-II aminoacyl-tRNA synthetase family. In terms of assembly, homodimer. Zn(2+) serves as cofactor.

It localises to the cytoplasm. The enzyme catalyses tRNA(Thr) + L-threonine + ATP = L-threonyl-tRNA(Thr) + AMP + diphosphate + H(+). In terms of biological role, catalyzes the attachment of threonine to tRNA(Thr) in a two-step reaction: L-threonine is first activated by ATP to form Thr-AMP and then transferred to the acceptor end of tRNA(Thr). Also edits incorrectly charged L-seryl-tRNA(Thr). The chain is Threonine--tRNA ligase from Nitratidesulfovibrio vulgaris (strain DSM 19637 / Miyazaki F) (Desulfovibrio vulgaris).